Reading from the N-terminus, the 371-residue chain is MSGASSGTAIGAHLFGVSPEYRVLIGDEGAGPSKSLSEVSFSVWYRSRAARLVILCLVASFLVPCLTFLIAEAVMGQTVTTPLSLTLDHWSEVRARAHNQGVEVRKKKWITLCKAEWVMMNVGWPREGTFSLDNISQVKKKIFAPGPHGHPDQVPYITTWRSLATDPPSWVRPFLPPPKPPTPLPQPLSPQPSAPLTSSLYPVVPKPDPPKPPVLPPDPSSPLIDLLTEEPPPYPGGHGPPPSGPRTPAASPIVSRLRERRENPAEESQALPLREGPNNRPQYWPFSASDLYNWKSHNPPFSQDPVALTNLIESILVTHQPTWDDCQQLLQALLTGEERQRVLLEARKQVPGEDGRPTQLPNVIDETFPLT.

The Cytoplasmic portion of the chain corresponds to 1–51 (MSGASSGTAIGAHLFGVSPEYRVLIGDEGAGPSKSLSEVSFSVWYRSRAAR). A helical membrane pass occupies residues 52 to 72 (LVILCLVASFLVPCLTFLIAE). Topologically, residues 73–371 (AVMGQTVTTP…NVIDETFPLT (299 aa)) are extracellular. Asparagine 134 carries N-linked (GlcNAc...) asparagine; by host glycosylation. Disordered stretches follow at residues 171-281 (VRPF…NNRP) and 350-371 (VPGE…FPLT). Over residues 174–193 (FLPPPKPPTPLPQPLSPQPS) the composition is skewed to pro residues. A compositionally biased stretch (low complexity) spans 194–203 (APLTSSLYPV). Pro residues-rich tracts occupy residues 204–220 (VPKP…PDPS) and 230–245 (EPPP…PSGP).

Glycosylated by host. Post-translationally, cleaved by host near the middle of the molecule, releasing the c-terminal half containing capsid and nucleoprotein domains op GAG.

It is found in the host cell membrane. Plays a role in viral particle release. Presumably acts by facilitating the fission of the virion bud at the cell surface. The polypeptide is Glyco-Gag protein (Feline sarcoma virus (strain Snyder-Theilen)).